Consider the following 896-residue polypeptide: DNA mismatch repair protein MutS (896 aa).

638-645 (GPNMSGKS) provides a ligand contact to ATP.

Belongs to the DNA mismatch repair MutS family.

Its function is as follows. This protein is involved in the repair of mismatches in DNA. It is possible that it carries out the mismatch recognition step. This protein has a weak ATPase activity. The chain is DNA mismatch repair protein MutS from Fusobacterium nucleatum subsp. nucleatum (strain ATCC 25586 / DSM 15643 / BCRC 10681 / CIP 101130 / JCM 8532 / KCTC 2640 / LMG 13131 / VPI 4355).